The following is a 993-amino-acid chain: Vinculin (993 aa).

A run of 2 repeats spans residues 258–364 (DSDN…TKEI) and 373–480 (TNTQ…ELVD). The 2 X repeats stretch occupies residues 258 to 480 (DSDNVTVMRK…LRNKLRELVD (223 aa)). A disordered region spans residues 730 to 797 (ITGAGGSRPP…PPPETDDEEE (68 aa)). The span at 758–768 (VHDRIYIREDI) shows a compositional bias: basic and acidic residues. Positions 769–790 (PTPPRPPPPVEISPPPRPPPPP) are enriched in pro residues.

It belongs to the vinculin/alpha-catenin family. Exhibits self-association properties.

The protein localises to the cytoplasm. It is found in the cytoskeleton. The protein resides in the cell junction. It localises to the adherens junction. Its subcellular location is the cell membrane. Its function is as follows. Involved in cell adhesion. May be involved in the attachment of the actin-based microfilaments to the plasma membrane. In Brugia malayi (Filarial nematode worm), this protein is Vinculin.